An 875-amino-acid polypeptide reads, in one-letter code: Translation initiation factor IF-2 (875 aa).

2 disordered regions span residues 123–204 (EKEK…EKPK) and 240–278 (ETKE…PVET). Residues 240–252 (ETKEEKAELEALR) show a composition bias toward basic and acidic residues. Over residues 259–268 (PKKKKKKKKK) the composition is skewed to basic residues. Positions 269-278 (KEEEKAPVET) are enriched in basic and acidic residues. The tr-type G domain maps to 379–547 (ERPPVVTVMG…NILLVSEILE (169 aa)). Positions 388 to 395 (GHVDHGKT) are G1. 388-395 (GHVDHGKT) lines the GTP pocket. Residues 413-417 (GITQH) form a G2 region. A G3 region spans residues 435–438 (DTPG). Residues 435–439 (DTPGH) and 489–492 (NKID) contribute to the GTP site. The interval 489–492 (NKID) is G4. The tract at residues 525–527 (SAK) is G5.

The protein belongs to the TRAFAC class translation factor GTPase superfamily. Classic translation factor GTPase family. IF-2 subfamily.

The protein resides in the cytoplasm. Functionally, one of the essential components for the initiation of protein synthesis. Protects formylmethionyl-tRNA from spontaneous hydrolysis and promotes its binding to the 30S ribosomal subunits. Also involved in the hydrolysis of GTP during the formation of the 70S ribosomal complex. The protein is Translation initiation factor IF-2 of Persephonella marina (strain DSM 14350 / EX-H1).